We begin with the raw amino-acid sequence, 327 residues long: Urease accessory protein UreD (327 aa).

The protein belongs to the UreD family. As to quaternary structure, ureD, UreF and UreG form a complex that acts as a GTP-hydrolysis-dependent molecular chaperone, activating the urease apoprotein by helping to assemble the nickel containing metallocenter of UreC. The UreE protein probably delivers the nickel.

It localises to the cytoplasm. Required for maturation of urease via the functional incorporation of the urease nickel metallocenter. This Yersinia enterocolitica serotype O:8 / biotype 1B (strain NCTC 13174 / 8081) protein is Urease accessory protein UreD.